The following is a 252-amino-acid chain: Probable ABC transporter ATP-binding protein p29 (252 aa).

In terms of domain architecture, ABC transporter spans 8–252 (LEIKNLTFKN…NILDQVFKND (245 aa)). 42 to 49 (GSSGQGKS) serves as a coordination point for ATP.

The protein belongs to the ABC transporter superfamily.

Part of a high-affinity transport system. The sequence is that of Probable ABC transporter ATP-binding protein p29 from Mesomycoplasma hyorhinis (Mycoplasma hyorhinis).